Here is a 301-residue protein sequence, read N- to C-terminus: Bifunctional protein FolD (301 aa).

Residues 169–171 (GRS), serine 194, and isoleucine 235 contribute to the NADP(+) site.

It belongs to the tetrahydrofolate dehydrogenase/cyclohydrolase family. In terms of assembly, homodimer.

It catalyses the reaction (6R)-5,10-methylene-5,6,7,8-tetrahydrofolate + NADP(+) = (6R)-5,10-methenyltetrahydrofolate + NADPH. It carries out the reaction (6R)-5,10-methenyltetrahydrofolate + H2O = (6R)-10-formyltetrahydrofolate + H(+). It participates in one-carbon metabolism; tetrahydrofolate interconversion. Its function is as follows. Catalyzes the oxidation of 5,10-methylenetetrahydrofolate to 5,10-methenyltetrahydrofolate and then the hydrolysis of 5,10-methenyltetrahydrofolate to 10-formyltetrahydrofolate. The polypeptide is Bifunctional protein FolD (Gloeothece citriformis (strain PCC 7424) (Cyanothece sp. (strain PCC 7424))).